The primary structure comprises 942 residues: Lambda-carrageenase (942 aa).

Residues 1 to 25 form the signal peptide; it reads MKIKILSAMIASSLLIGCVIPTVKA.

Monomer.

It localises to the secreted. The catalysed reaction is Endohydrolysis of (1-&gt;4)-beta-linkages in the backbone of lambda-carrageenan, resulting in the tetrasaccharide alpha-D-Galp2,6S2-(1-&gt;3)-beta-D-Galp2S-(1-&gt;4)-alpha-D-Galp2,6S2-(1-&gt;3)-D-Galp2S.. Hydrolyzes lambda-carrageenan with inversion of anomeric configuration. Does not hydrolyze iota- and kappa-carrageenans, agarose or porphyran. The polypeptide is Lambda-carrageenase (Pseudoalteromonas sp).